A 458-amino-acid polypeptide reads, in one-letter code: Transmembrane protein 135 (458 aa).

Transmembrane regions (helical) follow at residues 68 to 88 (ILQS…FFCI), 96 to 116 (FYSW…AILI), 149 to 169 (TLRN…MFFF), 298 to 318 (FQLG…SCFL), 331 to 351 (IVAG…TISM), and 377 to 397 (ADTI…VMEV).

The protein belongs to the TMEM135 family.

Its subcellular location is the mitochondrion membrane. It localises to the peroxisome membrane. In terms of biological role, involved in mitochondrial metabolism by regulating the balance between mitochondrial fusion and fission. May act as a regulator of mitochondrial fission that promotes DNM1L-dependent fission through activation of DNM1L. May be involved in peroxisome organization. This chain is Transmembrane protein 135, found in Mus musculus (Mouse).